Consider the following 1446-residue polypeptide: Sister chromatid cohesion protein PDS5 homolog B (1446 aa).

Residues 383 to 419 form an HEAT repeat; the sequence is LLVNDHLLNFVRERTLDKRWRVRKEAMMGLAQIYKKY. Lys-1136 bears the N6-acetyllysine mark. Over residues 1137–1155 the composition is skewed to polar residues; that stretch reads PLSSAGKQSQTKSSRMETV. The tract at residues 1137-1446 is disordered; it reads PLSSAGKQSQ…RRRSSKRERR (310 aa). Phosphoserine is present on residues Ser-1140, Ser-1162, Ser-1166, Ser-1176, Ser-1182, and Ser-1191. The segment covering 1156 to 1167 has biased composition (low complexity); it reads SNASSSSNPSSP. The segment covering 1172-1184 has biased composition (basic and acidic residues); it reads GRLDSSEMDHSEN. 2 stretches are compositionally biased toward basic and acidic residues: residues 1196 to 1212 and 1223 to 1241; these read KKSDKREDPDLSELEKP and PEEKLGMDDLTKLVQEQKP. Residues 1243-1252 show a composition bias toward basic residues; it reads GSQRGRKRGR. The a.T hook 1 DNA-binding region spans 1247–1259; the sequence is GRKRGRTASDSDE. Thr-1253 is subject to Phosphothreonine. A phosphoserine mark is found at Ser-1255 and Ser-1257. Basic and acidic residues predominate over residues 1263-1272; that stretch reads PEEKRHKEEL. Position 1281 is a phosphoserine (Ser-1281). The segment at residues 1285-1297 is a DNA-binding region (a.T hook 2); that stretch reads KGKRGRPPKPLGG. 2 stretches are compositionally biased toward basic residues: residues 1308-1317 and 1339-1351; these read TSKKGNKKKL and SKSKQHRTSKRAQ. Residues 1353–1370 are compositionally biased toward polar residues; that stretch reads RAESPETSAVESTQSTPQ. 2 positions are modified to phosphoserine: Ser-1356 and Ser-1364. Thr-1365 carries the post-translational modification Phosphothreonine. Ser-1367 is subject to Phosphoserine. A Phosphothreonine modification is found at Thr-1368. The a.T hook 3 DNA-binding region spans 1370–1382; sequence QKGRGRPSKAPSP. Residues Ser-1381, Ser-1415, and Ser-1418 each carry the phosphoserine modification. Acidic residues predominate over residues 1421–1431; that stretch reads TTQEGAEEEDI. Over residues 1436-1446 the composition is skewed to basic residues; sequence VRRRSSKRERR.

The protein belongs to the PDS5 family. In terms of assembly, interacts with the cohesin complex. Interacts with RAD21; the interaction is direct. Interacts with WAPL (via FGF motifs) or CDCA5 (via the FGF motif); the interaction is direct, cohesin-dependent and competitive. As to expression, expressed in prostate.

The protein resides in the nucleus. Its function is as follows. Regulator of sister chromatid cohesion in mitosis which may stabilize cohesin complex association with chromatin. May couple sister chromatid cohesion during mitosis to DNA replication. Cohesion ensures that chromosome partitioning is accurate in both meiotic and mitotic cells and plays an important role in DNA repair. Plays a role in androgen-induced proliferative arrest in prostate cells. The chain is Sister chromatid cohesion protein PDS5 homolog B (Pds5b) from Mus musculus (Mouse).